A 514-amino-acid polypeptide reads, in one-letter code: Serine--tRNA ligase, cytoplasmic (514 aa).

N-acetylmethionine is present on Met-1. Positions 9–61 (RVDKGGDPALIRETQEKRFKDPGLVDQLVKADSEWRRCRFRADNLNKLKNLCS) are interaction with tRNA. Ser-241 is subject to Phosphoserine. Thr-271 and Arg-302 together coordinate L-serine. ATP is bound by residues 302–304 (RQE) and 318–321 (VHQF). At Lys-323 the chain carries N6-acetyllysine. Residue Glu-325 coordinates L-serine. An ATP-binding site is contributed by 391–394 (ELVS). Asn-427 is an L-serine binding site. Residues 472 to 514 (KPAPIDQEPSKKQKKQHEGSKKKAAARDVTLENRLQNMEVTDA) are disordered. Over residues 479-502 (EPSKKQKKQHEGSKKKAAARDVTL) the composition is skewed to basic and acidic residues. The Nuclear localization signal signature appears at 482–494 (KKQKKQHEGSKKK). A compositionally biased stretch (polar residues) spans 504–514 (NRLQNMEVTDA).

The protein belongs to the class-II aminoacyl-tRNA synthetase family. Type-1 seryl-tRNA synthetase subfamily. Homodimer. The tRNA molecule may bind across the dimer. Interacts with SIRT2. Interacts with METTL6; interaction is required for the tRNA N(3)-methylcytidine methyltransferase activity of METTL6.

It is found in the cytoplasm. Its subcellular location is the nucleus. The catalysed reaction is tRNA(Ser) + L-serine + ATP = L-seryl-tRNA(Ser) + AMP + diphosphate + H(+). It catalyses the reaction tRNA(Sec) + L-serine + ATP = L-seryl-tRNA(Sec) + AMP + diphosphate + H(+). It functions in the pathway aminoacyl-tRNA biosynthesis; selenocysteinyl-tRNA(Sec) biosynthesis; L-seryl-tRNA(Sec) from L-serine and tRNA(Sec): step 1/1. In terms of biological role, catalyzes the attachment of serine to tRNA(Ser) in a two-step reaction: serine is first activated by ATP to form Ser-AMP and then transferred to the acceptor end of tRNA(Ser). Is probably also able to aminoacylate tRNA(Sec) with serine, to form the misacylated tRNA L-seryl-tRNA(Sec), which will be further converted into selenocysteinyl-tRNA(Sec). In the nucleus, binds to the VEGFA core promoter and prevents MYC binding and transcriptional activation by MYC. Recruits SIRT2 to the VEGFA promoter, promoting deacetylation of histone H4 at 'Lys-16' (H4K16). Thereby, inhibits the production of VEGFA and sprouting angiogenesis mediated by VEGFA. The polypeptide is Serine--tRNA ligase, cytoplasmic (SARS1) (Oryctolagus cuniculus (Rabbit)).